A 311-amino-acid chain; its full sequence is Methionyl-tRNA formyltransferase (311 aa).

Residue 112–115 (SLLP) coordinates (6S)-5,6,7,8-tetrahydrofolate.

Belongs to the Fmt family.

It carries out the reaction L-methionyl-tRNA(fMet) + (6R)-10-formyltetrahydrofolate = N-formyl-L-methionyl-tRNA(fMet) + (6S)-5,6,7,8-tetrahydrofolate + H(+). Its function is as follows. Attaches a formyl group to the free amino group of methionyl-tRNA(fMet). The formyl group appears to play a dual role in the initiator identity of N-formylmethionyl-tRNA by promoting its recognition by IF2 and preventing the misappropriation of this tRNA by the elongation apparatus. The chain is Methionyl-tRNA formyltransferase from Rhizobium meliloti (strain 1021) (Ensifer meliloti).